The following is a 228-amino-acid chain: Ephrin-A5 (228 aa).

Residues 1–20 (MPHVEMLLLAVAALWVCVRG) form the signal peptide. One can recognise an Ephrin RBD domain in the interval 29 to 162 (ADRYAVYWNS…KLKVFVRPAN (134 aa)). An N-linked (GlcNAc...) asparagine glycan is attached at N37. 2 cysteine pairs are disulfide-bonded: C62–C102 and C90–C151. Residue N203 is the site of GPI-anchor amidated asparagine attachment. Positions 204-228 (AAQTPRIPIRLLATLLFLLAMLLIL) are cleaved as a propeptide — removed in mature form.

The protein belongs to the ephrin family. Expressed in a graded fashion across the tectum being more strongly expressed towards the posterior pole.

It is found in the cell membrane. Functionally, cell surface GPI-bound ligand for Eph receptors, a family of receptor tyrosine kinases which are crucial for migration, repulsion and adhesion during neuronal, vascular and epithelial development. Binds promiscuously Eph receptors residing on adjacent cells, leading to contact-dependent bidirectional signaling into neighboring cells. Induces compartmentalized signaling within a caveolae-like membrane microdomain when bound to the extracellular domain of its cognate receptor. This signaling event requires the activity of the Fyn tyrosine kinase. Activates the EPHA3 receptor to regulate cell-cell adhesion and cytoskeletal organization. With the receptor EPHA2 may regulate lens fiber cells shape and interactions and be important for lens transparency maintenance. May function actively to stimulate axon fasciculation. Induces growth cone collapse and repulsion of retinal ganglion cell axons. The chain is Ephrin-A5 (EFNA5) from Gallus gallus (Chicken).